Here is a 103-residue protein sequence, read N- to C-terminus: Small ribosomal subunit protein uS14c (103 aa).

Positions S26–N56 are disordered.

Belongs to the universal ribosomal protein uS14 family. Part of the 30S ribosomal subunit.

Its subcellular location is the plastid. It localises to the chloroplast. In terms of biological role, binds 16S rRNA, required for the assembly of 30S particles. The protein is Small ribosomal subunit protein uS14c of Saccharum officinarum (Sugarcane).